The chain runs to 215 residues: Peptide methionine sulfoxide reductase MsrA (215 aa).

Residue Cys-57 is part of the active site.

Belongs to the MsrA Met sulfoxide reductase family.

The catalysed reaction is L-methionyl-[protein] + [thioredoxin]-disulfide + H2O = L-methionyl-(S)-S-oxide-[protein] + [thioredoxin]-dithiol. It carries out the reaction [thioredoxin]-disulfide + L-methionine + H2O = L-methionine (S)-S-oxide + [thioredoxin]-dithiol. Functionally, has an important function as a repair enzyme for proteins that have been inactivated by oxidation. Catalyzes the reversible oxidation-reduction of methionine sulfoxide in proteins to methionine. The chain is Peptide methionine sulfoxide reductase MsrA from Saccharophagus degradans (strain 2-40 / ATCC 43961 / DSM 17024).